We begin with the raw amino-acid sequence, 323 residues long: Fructose-1,6-bisphosphatase class 1 (323 aa).

Glutamate 88, aspartate 107, leucine 109, and aspartate 110 together coordinate Mg(2+). Substrate contacts are provided by residues 110–113 and asparagine 200; that span reads DGSS. Glutamate 272 serves as a coordination point for Mg(2+).

The protein belongs to the FBPase class 1 family. Homotetramer. Mg(2+) serves as cofactor.

The protein resides in the cytoplasm. The catalysed reaction is beta-D-fructose 1,6-bisphosphate + H2O = beta-D-fructose 6-phosphate + phosphate. The protein operates within carbohydrate biosynthesis; gluconeogenesis. This Acinetobacter baumannii (strain AYE) protein is Fructose-1,6-bisphosphatase class 1.